Here is a 371-residue protein sequence, read N- to C-terminus: 4-hydroxy-3-methylbut-2-en-1-yl diphosphate synthase (flavodoxin) (371 aa).

Positions 270, 273, 305, and 312 each coordinate [4Fe-4S] cluster.

The protein belongs to the IspG family. [4Fe-4S] cluster serves as cofactor.

The catalysed reaction is (2E)-4-hydroxy-3-methylbut-2-enyl diphosphate + oxidized [flavodoxin] + H2O + 2 H(+) = 2-C-methyl-D-erythritol 2,4-cyclic diphosphate + reduced [flavodoxin]. It functions in the pathway isoprenoid biosynthesis; isopentenyl diphosphate biosynthesis via DXP pathway; isopentenyl diphosphate from 1-deoxy-D-xylulose 5-phosphate: step 5/6. In terms of biological role, converts 2C-methyl-D-erythritol 2,4-cyclodiphosphate (ME-2,4cPP) into 1-hydroxy-2-methyl-2-(E)-butenyl 4-diphosphate. This Shewanella sp. (strain ANA-3) protein is 4-hydroxy-3-methylbut-2-en-1-yl diphosphate synthase (flavodoxin).